Reading from the N-terminus, the 197-residue chain is MFEYLNGKLVKISPTNIVIDLSGIGYLISVANPYAWSALMNTEVKIYVHQVIREDAHSLYGFVNESEKALFLRLISVSGIGPKSALAIIAAADNEGLINAIDNSDIKYLTKFPGVGKKTAMQMVLDLAGKFDATGAVGISLLDAAPAGNLALEEAIEALQALGYKATELKKIEKKLEQEAGLTSEEYIKSALKLMMK.

A domain I region spans residues 1 to 63 (MFEYLNGKLV…EDAHSLYGFV (63 aa)). The segment at 64 to 142 (NESEKALFLR…ATGAVGISLL (79 aa)) is domain II. Residues 142–146 (LDAAP) are flexible linker. A domain III region spans residues 147-197 (AGNLALEEAIEALQALGYKATELKKIEKKLEQEAGLTSEEYIKSALKLMMK).

This sequence belongs to the RuvA family. Homotetramer. Forms an RuvA(8)-RuvB(12)-Holliday junction (HJ) complex. HJ DNA is sandwiched between 2 RuvA tetramers; dsDNA enters through RuvA and exits via RuvB. An RuvB hexamer assembles on each DNA strand where it exits the tetramer. Each RuvB hexamer is contacted by two RuvA subunits (via domain III) on 2 adjacent RuvB subunits; this complex drives branch migration. In the full resolvosome a probable DNA-RuvA(4)-RuvB(12)-RuvC(2) complex forms which resolves the HJ.

Its subcellular location is the cytoplasm. Its function is as follows. The RuvA-RuvB-RuvC complex processes Holliday junction (HJ) DNA during genetic recombination and DNA repair, while the RuvA-RuvB complex plays an important role in the rescue of blocked DNA replication forks via replication fork reversal (RFR). RuvA specifically binds to HJ cruciform DNA, conferring on it an open structure. The RuvB hexamer acts as an ATP-dependent pump, pulling dsDNA into and through the RuvAB complex. HJ branch migration allows RuvC to scan DNA until it finds its consensus sequence, where it cleaves and resolves the cruciform DNA. The chain is Holliday junction branch migration complex subunit RuvA from Lactococcus lactis subsp. cremoris (strain SK11).